Here is a 253-residue protein sequence, read N- to C-terminus: Probable transcriptional regulatory protein Mmar10_2433 (253 aa).

Belongs to the TACO1 family.

It is found in the cytoplasm. This chain is Probable transcriptional regulatory protein Mmar10_2433, found in Maricaulis maris (strain MCS10) (Caulobacter maris).